The chain runs to 400 residues: Cytohesin-2 (400 aa).

Residues 10–63 (DLTPEERMELENIRRRKQELLVEIQRLREELSEAMSEVEGLEANEGSKTLQRNR) adopt a coiled-coil conformation. Positions 72–201 (FNMDPKKGIQ…VIMLNTSLHN (130 aa)) constitute an SEC7 domain. Residues 259-376 (NPDREGWLLK…WIKSIQAAVS (118 aa)) enclose the PH domain. A 1,2-diacyl-sn-glycero-3-phospho-(1D-myo-inositol-3,4,5-trisphosphate) is bound by residues 268-276 (KLGGGRVKT), R280, Y291, R301, K339, N350, and H351. The C-terminal autoinhibitory region stretch occupies residues 387–395 (RKKRISVKK).

In terms of assembly, heteromer. Composed of TAMALIN, CYTH2 and at least one GRM1. Interacts with ARRB1. Interacts with ARL4D; the interaction is direct. Directly interacts with CCDC120 through the coiled coil domain; this interaction stabilizes CCDC120, possibly by preventing its ubiquitination, and is required for neurite growth in neuroblastoma cells. Interacts with ARF1. Interacts with FRMD4A. Interacts (via N-terminal domain) with INAVA (via N-terminal domain). In terms of tissue distribution, widely expressed.

Its subcellular location is the cell membrane. The protein localises to the cytoplasm. It is found in the cell projection. It localises to the growth cone. The protein resides in the cell junction. Its subcellular location is the tight junction. The protein localises to the adherens junction. In terms of biological role, acts as a guanine-nucleotide exchange factor (GEF). Promotes guanine-nucleotide exchange on ARF1, ARF3 and ARF6. Activates ARF factors through replacement of GDP with GTP. The cell membrane form, in association with ARL4 proteins, recruits ARF6 to the plasma membrane. Involved in neurite growth. The chain is Cytohesin-2 from Homo sapiens (Human).